Here is a 270-residue protein sequence, read N- to C-terminus: Probable endonuclease LCL3 (270 aa).

The chain crosses the membrane as a helical span at residues 15-37 (FYPTVLLFSILLTGGVLTATSFY). Residues 58–257 (QWLYGKVTSV…KKAKRGLWSQ (200 aa)) enclose the TNase-like domain. The active site involves arginine 147. Aspartate 152 serves as a coordination point for Ca(2+). Catalysis depends on residues glutamate 155 and arginine 195.

Belongs to the LCL3 family.

The protein localises to the mitochondrion. It localises to the membrane. This Kluyveromyces lactis (strain ATCC 8585 / CBS 2359 / DSM 70799 / NBRC 1267 / NRRL Y-1140 / WM37) (Yeast) protein is Probable endonuclease LCL3 (LCL3).